A 91-amino-acid polypeptide reads, in one-letter code: MDEVKYPVLTEKSIRLLERNQYTFNVDLQSNKTKIKNWIENFFDVKVIAMNSYRLPEKGGKRGSMIVHPIRCKRMIITLRTGDSIPLFSEQ.

This sequence belongs to the universal ribosomal protein uL23 family. As to quaternary structure, part of the 50S ribosomal subunit.

It localises to the plastid. The protein localises to the chloroplast. Binds to 23S rRNA. The chain is Large ribosomal subunit protein uL23c (rpl23) from Pinus koraiensis (Korean pine).